Here is a 353-residue protein sequence, read N- to C-terminus: UPF0283 membrane protein YcjF (353 aa).

A compositionally biased stretch (basic and acidic residues) spans 1–19 (MSEPLKPRIDFAEPLKEEP). The segment at 1–35 (MSEPLKPRIDFAEPLKEEPTSAFKAQQTFSEAESR) is disordered. 3 helical membrane passes run 70 to 90 (MVMG…IQWT), 100 to 120 (VALG…GSVV), and 213 to 233 (ESTL…FIAW).

The protein belongs to the UPF0283 family.

Its subcellular location is the cell inner membrane. The sequence is that of UPF0283 membrane protein YcjF from Salmonella agona (strain SL483).